Here is a 363-residue protein sequence, read N- to C-terminus: Protein-arginine kinase (363 aa).

A Phosphagen kinase C-terminal domain is found at 24–255; it reads IVLSSRIRLA…QQLIAQERAA (232 aa). Residues 27 to 31, histidine 92, arginine 126, 177 to 181, and 208 to 213 contribute to the ATP site; these read SSRIR, RASVM, and RGTYGE. Positions 338–343 match the RDXXRA motif of the pArg binding pocket involved in allosteric regulation motif; the sequence is RDVRRA.

This sequence belongs to the ATP:guanido phosphotransferase family.

The catalysed reaction is L-arginyl-[protein] + ATP = N(omega)-phospho-L-arginyl-[protein] + ADP + H(+). Appears to be allosterically activated by the binding of pArg-containing polypeptides to the pArg-binding pocket localized in the C-terminal domain of McsB. Its function is as follows. Catalyzes the specific phosphorylation of arginine residues in a large number of proteins. Is part of the bacterial stress response system. Protein arginine phosphorylation has a physiologically important role and is involved in the regulation of many critical cellular processes, such as protein homeostasis, motility, competence, and stringent and stress responses, by regulating gene expression and protein activity. The sequence is that of Protein-arginine kinase from Geobacillus kaustophilus (strain HTA426).